The sequence spans 561 residues: Formate--tetrahydrofolate ligase (561 aa).

66–73 (TPAGEGKT) serves as a coordination point for ATP.

The protein belongs to the formate--tetrahydrofolate ligase family.

It catalyses the reaction (6S)-5,6,7,8-tetrahydrofolate + formate + ATP = (6R)-10-formyltetrahydrofolate + ADP + phosphate. The protein operates within one-carbon metabolism; tetrahydrofolate interconversion. The protein is Formate--tetrahydrofolate ligase of Methylibium petroleiphilum (strain ATCC BAA-1232 / LMG 22953 / PM1).